The following is a 195-amino-acid chain: Protein GrpE (195 aa).

Positions 1–24 (MSSKEQNTPDEQVSQESEMEQGQQ) are enriched in polar residues. Residues 1-40 (MSSKEQNTPDEQVSQESEMEQGQQAEAAPETVDVVDPRDE) form a disordered region.

It belongs to the GrpE family. In terms of assembly, homodimer.

The protein localises to the cytoplasm. Participates actively in the response to hyperosmotic and heat shock by preventing the aggregation of stress-denatured proteins, in association with DnaK and GrpE. It is the nucleotide exchange factor for DnaK and may function as a thermosensor. Unfolded proteins bind initially to DnaJ; upon interaction with the DnaJ-bound protein, DnaK hydrolyzes its bound ATP, resulting in the formation of a stable complex. GrpE releases ADP from DnaK; ATP binding to DnaK triggers the release of the substrate protein, thus completing the reaction cycle. Several rounds of ATP-dependent interactions between DnaJ, DnaK and GrpE are required for fully efficient folding. The chain is Protein GrpE from Sodalis glossinidius (strain morsitans).